Consider the following 316-residue polypeptide: Transaldolase (316 aa).

K125 functions as the Schiff-base intermediate with substrate in the catalytic mechanism.

It belongs to the transaldolase family. Type 1 subfamily. As to quaternary structure, homodimer.

The protein localises to the cytoplasm. It catalyses the reaction D-sedoheptulose 7-phosphate + D-glyceraldehyde 3-phosphate = D-erythrose 4-phosphate + beta-D-fructose 6-phosphate. It functions in the pathway carbohydrate degradation; pentose phosphate pathway; D-glyceraldehyde 3-phosphate and beta-D-fructose 6-phosphate from D-ribose 5-phosphate and D-xylulose 5-phosphate (non-oxidative stage): step 2/3. In terms of biological role, transaldolase is important for the balance of metabolites in the pentose-phosphate pathway. In Acidovorax ebreus (strain TPSY) (Diaphorobacter sp. (strain TPSY)), this protein is Transaldolase.